The following is a 968-amino-acid chain: Isoleucine--tRNA ligase (968 aa).

A 'HIGH' region motif is present at residues 68–78; that stretch reads PYANGALHMGH. An L-isoleucyl-5'-AMP-binding site is contributed by Glu582. Residues 623 to 627 carry the 'KMSKS' region motif; the sequence is KMSKS. An ATP-binding site is contributed by Lys626. The Zn(2+) site is built by Cys936, Cys939, Cys956, and Cys959.

The protein belongs to the class-I aminoacyl-tRNA synthetase family. IleS type 1 subfamily. As to quaternary structure, monomer. Zn(2+) is required as a cofactor.

The protein localises to the cytoplasm. The enzyme catalyses tRNA(Ile) + L-isoleucine + ATP = L-isoleucyl-tRNA(Ile) + AMP + diphosphate. Functionally, catalyzes the attachment of isoleucine to tRNA(Ile). As IleRS can inadvertently accommodate and process structurally similar amino acids such as valine, to avoid such errors it has two additional distinct tRNA(Ile)-dependent editing activities. One activity is designated as 'pretransfer' editing and involves the hydrolysis of activated Val-AMP. The other activity is designated 'posttransfer' editing and involves deacylation of mischarged Val-tRNA(Ile). This Prochlorococcus marinus (strain MIT 9301) protein is Isoleucine--tRNA ligase.